The primary structure comprises 646 residues: Mitochondrial distribution and morphology protein 10 (646 aa).

2 disordered regions span residues 206 to 230 (KSTSSSMDRLDSSNPSLSSSTSLSN) and 315 to 347 (ETSSSASYPQRNGSVLHTGSSSSSEDTEAGGGL). Residues 207-230 (STSSSMDRLDSSNPSLSSSTSLSN) are compositionally biased toward low complexity. The segment covering 315–333 (ETSSSASYPQRNGSVLHTG) has biased composition (polar residues).

This sequence belongs to the MDM10 family. As to quaternary structure, component of the ER-mitochondria encounter structure (ERMES) or MDM complex, composed of MMM1, MDM10, MDM12 and MDM34. Associates with the mitochondrial outer membrane sorting assembly machinery SAM(core) complex.

It is found in the mitochondrion outer membrane. Component of the ERMES/MDM complex, which serves as a molecular tether to connect the endoplasmic reticulum and mitochondria. Components of this complex are involved in the control of mitochondrial shape and protein biogenesis and may function in phospholipid exchange. MDM10 is involved in the late assembly steps of the general translocase of the mitochondrial outer membrane (TOM complex). Functions in the TOM40-specific route of the assembly of outer membrane beta-barrel proteins, including the association of TOM40 with the receptor TOM22 and small TOM proteins. Can associate with the SAM(core) complex as well as the MDM12-MMM1 complex, both involved in late steps of the major beta-barrel assembly pathway, that is responsible for biogenesis of all outer membrane beta-barrel proteins. May act as a switch that shuttles between both complexes and channels precursor proteins into the TOM40-specific pathway. Plays a role in mitochondrial morphology and in the inheritance of mitochondria. The polypeptide is Mitochondrial distribution and morphology protein 10 (Mycosarcoma maydis (Corn smut fungus)).